The following is a 1089-amino-acid chain: Translocase of chloroplast 120, chloroplastic (1089 aa).

Glycine 2 is modified (N-acetylglycine). Disordered regions lie at residues 158-179 (ATED…GVVS), 255-339 (TLSP…GLGR), and 353-381 (QPRV…EHDE). Residues 165–176 (ENGNTHSSSENG) are compositionally biased toward polar residues. Serine 179, serine 263, and serine 283 each carry phosphoserine. The span at 300–312 (EIKESQHMERESE) shows a compositional bias: basic and acidic residues. Residues 327 to 339 (AALPPARPAGLGR) show a composition bias toward low complexity. The segment covering 353–374 (QPRVNGNVSHNQPQQAEDSTTA) has biased composition (polar residues). In terms of domain architecture, AIG1-type G spans 454-683 (DFSCTIMVLG…KLQDNIPGGQ (230 aa)). A G1 region spans residues 463–470 (GKSGVGKS). Residues 466-471 (GVGKSA) and 485-490 (DAFQVG) each bind GTP. Residue serine 470 coordinates Mg(2+). The tract at residues 485–488 (DAFQ) is homodimerization. Residues 489–493 (VGTKK) are G2. Residues 510 to 513 (DTPG) form a G3 region. A homodimerization region spans residues 548–553 (RLDMQS). The G4 stretch occupies residues 582–585 (THAA). GTP is bound by residues histidine 583 and 631–632 (EN). The tract at residues 631–633 (ENH) is G5. Residues 710 to 748 (PEQQYDDEDDEDDLDESSDSEEESEYDELPPFKRLTKAE) are disordered. A compositionally biased stretch (acidic residues) spans 713–737 (QYDDEDDEDDLDESSDSEEESEYDE). Residues 767–788 (REKLFMKRQMKEERKRRKLLKK) adopt a coiled-coil conformation. A helical transmembrane segment spans residues 1064-1080 (LAVVALVPLFKKLLTYY).

This sequence belongs to the TRAFAC class TrmE-Era-EngA-EngB-Septin-like GTPase superfamily. AIG1/Toc34/Toc159-like paraseptin GTPase family. TOC159 subfamily. Homodimer. Part of the TOC core complex that includes 1 protein for the specific recognition of transit peptides surrounded by a ring composed of four proteins forming translocation channels, and four to five GTP-binding proteins providing energy. This core complex can interact with components of the TIC complex to form a larger import complex. Chloroplastic protein precursor such as prSS (precursor of the RuBisCO small subunit) interacts with these complexes. The TOC complex contains a specific subset of polar lipids such as digalactosyldiacylglyceride (DGDG), phosphatidylcholine (PC) and phosphatidylglycerol (PG). It depends on Mg(2+) as a cofactor. In terms of processing, phosphorylated by KOC1. In terms of tissue distribution, expressed in seedlings, flowers, and roots.

The protein resides in the plastid. Its subcellular location is the chloroplast outer membrane. The protein localises to the cytoplasm. Functionally, GTPase involved in protein precursor import into chloroplasts. Seems to recognize chloroplast-destined precursor proteins and regulate their presentation to the translocation channel through GTP hydrolysis. Probably specialized in the import of nuclear encoded non-photosynthetic preproteins from the cytoplasm to the chloroplast. The chain is Translocase of chloroplast 120, chloroplastic from Arabidopsis thaliana (Mouse-ear cress).